The following is a 519-amino-acid chain: O-fucosyltransferase 31 (519 aa).

A helical; Signal-anchor for type II membrane protein transmembrane segment spans residues 18 to 38 (ALAGVFVLLFPILYPNLFSPL). The N-linked (GlcNAc...) asparagine glycan is linked to Asn-131. Substrate is bound at residue 302-304 (HLR). Asn-373 and Asn-474 each carry an N-linked (GlcNAc...) asparagine glycan.

This sequence belongs to the glycosyltransferase GT106 family.

The protein localises to the membrane. The protein operates within glycan metabolism. The sequence is that of O-fucosyltransferase 31 from Arabidopsis thaliana (Mouse-ear cress).